Reading from the N-terminus, the 308-residue chain is Ribosomal RNA small subunit methyltransferase H (308 aa).

S-adenosyl-L-methionine contacts are provided by residues 36–38 (GGH), aspartate 55, phenylalanine 82, aspartate 103, and glutamine 110.

Belongs to the methyltransferase superfamily. RsmH family.

It localises to the cytoplasm. It catalyses the reaction cytidine(1402) in 16S rRNA + S-adenosyl-L-methionine = N(4)-methylcytidine(1402) in 16S rRNA + S-adenosyl-L-homocysteine + H(+). Specifically methylates the N4 position of cytidine in position 1402 (C1402) of 16S rRNA. The chain is Ribosomal RNA small subunit methyltransferase H from Helicobacter pylori (strain J99 / ATCC 700824) (Campylobacter pylori J99).